A 158-amino-acid polypeptide reads, in one-letter code: NAD(P)H-quinone oxidoreductase subunit N (158 aa).

This sequence belongs to the complex I NdhN subunit family. NDH-1 can be composed of about 15 different subunits; different subcomplexes with different compositions have been identified which probably have different functions.

It localises to the cellular thylakoid membrane. The catalysed reaction is a plastoquinone + NADH + (n+1) H(+)(in) = a plastoquinol + NAD(+) + n H(+)(out). It carries out the reaction a plastoquinone + NADPH + (n+1) H(+)(in) = a plastoquinol + NADP(+) + n H(+)(out). Functionally, NDH-1 shuttles electrons from an unknown electron donor, via FMN and iron-sulfur (Fe-S) centers, to quinones in the respiratory and/or the photosynthetic chain. The immediate electron acceptor for the enzyme in this species is believed to be plastoquinone. Couples the redox reaction to proton translocation, and thus conserves the redox energy in a proton gradient. Cyanobacterial NDH-1 also plays a role in inorganic carbon-concentration. This chain is NAD(P)H-quinone oxidoreductase subunit N, found in Crocosphaera subtropica (strain ATCC 51142 / BH68) (Cyanothece sp. (strain ATCC 51142)).